An 810-amino-acid polypeptide reads, in one-letter code: Interleukin-4 receptor subunit alpha (810 aa).

A signal peptide spans 1-25; it reads MGRLCTKFLTSVGCLILLLVTGSGS. Over 26–233 the chain is Extracellular; the sequence is IKVLGEPTCF…NHFQLPLIQR (208 aa). An intrachain disulfide couples Cys34 to Cys44. Asn72 carries an N-linked (GlcNAc...) asparagine glycan. Cys75 and Cys87 are oxidised to a cystine. Residues 126 to 224 enclose the Fibronectin type-III domain; that stretch reads APDNLTLHTN…EWSPSITWYN (99 aa). Residues Asn129, Asn135, and Asn163 are each glycosylated (N-linked (GlcNAc...) asparagine). Ser165 is subject to Phosphoserine. Positions 213–217 match the WSXWS motif motif; that stretch reads WSEWS. Residues 234–257 traverse the membrane as a helical segment; that stretch reads LPLGVTISCLCIPLFCLFCYFSIT. The Cytoplasmic portion of the chain corresponds to 258 to 810; it reads KIKKIWWDQI…PVGALGIAVS (553 aa). The Box 1 motif signature appears at 263–271; sequence WWDQIPTPA. Residues 441 to 557 form a required for IRS1 activation and IL4-induced cell growth region; the sequence is GSGQASVSWA…ESWEQILHMS (117 aa). The tract at residues 460 to 482 is disordered; sequence ATCQVTEQPSHPGPLSGSPAQSA. Position 500 is a phosphotyrosine (Tyr500). The interval 510 to 546 is disordered; the sequence is APNPGELAPEQQQADHLEEEEPPSPADPHSSGPPMQP. Residues 557 to 653 form a required for IL4-induced gene expression region; sequence SVLQHGAAAG…SSVPLFTFGL (97 aa). Phosphotyrosine is present on residues Tyr575, Tyr603, and Tyr631. Residues 586-672 form a disordered region; that stretch reads AAQDPGVPGV…NSDPPKSPPE (87 aa). The segment covering 635 to 647 has biased composition (low complexity); the sequence is QNPVPNQSPSSVP. Residues 707–712 carry the ITIM motif motif; sequence IVYSSL. Positions 766–810 are disordered; it reads PPEANLMSAPKTPSNLSGEGKGPGHSPVPSQTTEVPVGALGIAVS.

It belongs to the type I cytokine receptor family. Type 4 subfamily. As to quaternary structure, the functional IL4 receptor is formed by initial binding of IL4 to IL4R. Subsequent recruitment to the complex of the common gamma chain, in immune cells, creates a type I receptor and, in non-immune cells, of IL13RA1 forms a type II receptor. IL4R can also interact with the IL13/IL13RA1 complex to form a similar type II receptor. Interacts with the SH2-containing phosphatases, PTPN6/SHIP1, PTPN11/SHIP2 and INPP5D/SHIP. Interacts with JAK3. Interacts with PIK3C3. Interacts with JAK1 through a Box 1-containing region; inhibited by SOCS5. Interacts with SOCS5; inhibits IL4 signaling. Interacts with CLM1. Interacts with IL13RA2. In terms of processing, on IL4 binding, phosphorylated on C-terminal tyrosine residues. Post-translationally, soluble IL4R can also be produced by proteolytic cleavage at the cell surface (shedding). As to expression, expressed in both Th1 and Th2 cells.

The protein localises to the cell membrane. It localises to the secreted. In terms of biological role, receptor for both interleukin 4 and interleukin 13. Couples to the JAK1/2/3-STAT6 pathway. The IL4 response is involved in promoting Th2 differentiation. The IL4/IL13 responses are involved in regulating IgE production and, chemokine and mucus production at sites of allergic inflammation. In certain cell types, can signal through activation of insulin receptor substrates, IRS1/IRS2. In Mus musculus (Mouse), this protein is Interleukin-4 receptor subunit alpha (Il4r).